Reading from the N-terminus, the 180-residue chain is Large ribosomal subunit protein uL5 (180 aa).

The protein belongs to the universal ribosomal protein uL5 family. Part of the 50S ribosomal subunit; part of the 5S rRNA/L5/L18/L25 subcomplex. Contacts the 5S rRNA and the P site tRNA. Forms a bridge to the 30S subunit in the 70S ribosome.

In terms of biological role, this is one of the proteins that bind and probably mediate the attachment of the 5S RNA into the large ribosomal subunit, where it forms part of the central protuberance. In the 70S ribosome it contacts protein S13 of the 30S subunit (bridge B1b), connecting the 2 subunits; this bridge is implicated in subunit movement. Contacts the P site tRNA; the 5S rRNA and some of its associated proteins might help stabilize positioning of ribosome-bound tRNAs. This Leuconostoc citreum (strain KM20) protein is Large ribosomal subunit protein uL5.